Reading from the N-terminus, the 80-residue chain is Small ribosomal subunit protein uS17 (80 aa).

The protein belongs to the universal ribosomal protein uS17 family. As to quaternary structure, part of the 30S ribosomal subunit.

In terms of biological role, one of the primary rRNA binding proteins, it binds specifically to the 5'-end of 16S ribosomal RNA. This chain is Small ribosomal subunit protein uS17, found in Brucella abortus (strain S19).